The following is a 25-amino-acid chain: Antimicrobial peptide THP3 (25 aa).

The protein localises to the secreted. Bactericidal activity; inhibits Staphylococcus aureus. The chain is Antimicrobial peptide THP3 from Meleagris gallopavo (Wild turkey).